Reading from the N-terminus, the 309-residue chain is Taste receptor type 2 member 31 (309 aa).

Residues 1–2 (MT) lie on the Extracellular side of the membrane. A helical transmembrane segment spans residues 3–23 (TFIPIIFSSLVVVIFVIGNFA). The Cytoplasmic segment spans residues 24-55 (NGFIALVNSIEWFKRQKISFADQILTALAVSR). The helical transmembrane segment at 56-76 (VGLLWVLLLNWYSTVLNPAFY) threads the bilayer. Residues 77 to 100 (SVEVRTTAYNVWAVTGHFSNWLAT) are Extracellular-facing. The chain crosses the membrane as a helical span at residues 101 to 121 (SLSIFYLLKIANFSNLIFLHL). The Cytoplasmic portion of the chain corresponds to 122 to 126 (KRRVK). The helical transmembrane segment at 127–147 (SVILVMLLGPLLFLACQLFMI) threads the bilayer. The Extracellular portion of the chain corresponds to 148–181 (NMKEIVRTKEYEGNMTWKIKLRSAVYLSDATVTT). Asparagine 161 carries an N-linked (GlcNAc...) asparagine glycan. Residues 182-202 (LGNLVPFTLTLLCFLLLICSL) form a helical membrane-spanning segment. The Cytoplasmic segment spans residues 203-229 (CKHLKKMQLHGKGSQDPSTKVHIKVLQ). A helical transmembrane segment spans residues 230 to 250 (TVISFLLLCAIYFLSIMISVW). The Extracellular segment spans residues 251-259 (SFGSLKNKP). Residues 260–280 (VFMFCKAMRFSYPSIHPFILI) form a helical membrane-spanning segment. Over 281–309 (WGNKKLKQTFLSVLRQVRYWVKGEKPSSP) the chain is Cytoplasmic.

This sequence belongs to the G-protein coupled receptor T2R family.

Its subcellular location is the membrane. Its function is as follows. Receptor that may play a role in the perception of bitterness and is gustducin-linked. May play a role in sensing the chemical composition of the gastrointestinal content. The activity of this receptor may stimulate alpha gustducin, mediate PLC-beta-2 activation and lead to the gating of TRPM5. The polypeptide is Taste receptor type 2 member 31 (TAS2R31) (Pan troglodytes (Chimpanzee)).